Reading from the N-terminus, the 308-residue chain is HTH-type transcriptional activator AllS (308 aa).

Positions Phe2–Thr59 constitute an HTH lysR-type domain. Residues Phe19–Lys38 constitute a DNA-binding region (H-T-H motif).

This sequence belongs to the LysR transcriptional regulatory family.

In terms of biological role, positive regulator essential for the expression of allD operon. Binds to the allD promoter. The protein is HTH-type transcriptional activator AllS (allS) of Salmonella paratyphi A (strain ATCC 9150 / SARB42).